Consider the following 340-residue polypeptide: Cysteinyl leukotriene receptor 1 (340 aa).

Residues 1-31 (MDGVRNLTVSCASSNTCNDTIDDFRNQVYST) lie on the Extracellular side of the membrane. Residues Asn6 and Asn18 are each glycosylated (N-linked (GlcNAc...) asparagine). A helical transmembrane segment spans residues 32 to 52 (LYSMITVVGFFGNGFVLYVLI). The Cytoplasmic segment spans residues 53-60 (KTYHEKSA). A helical transmembrane segment spans residues 61 to 81 (YQVYMINLAVADLLCVCTLPL). At 82–109 (RVVYYVHKGIWLFGDFLCRLSTYALYVN) the chain is on the extracellular side. Cys99 and Cys176 are joined by a disulfide. A helical membrane pass occupies residues 110–130 (LYCSIFFMTAMSFFRCIAIVF). Residues 131–144 (PVQNINLITHKKAK) lie on the Cytoplasmic side of the membrane. The helical transmembrane segment at 145–165 (IVCIAIWIFVILTSSPFLMST) threads the bilayer. Residues 166-196 (SYKDEKNNTKCFEPPQXNQAKYHVLVLHYVS) are Extracellular-facing. Residue Asn172 is glycosylated (N-linked (GlcNAc...) asparagine). Residues 197-217 (LFVGFIIPFVIIIVCYTMIIL) traverse the membrane as a helical segment. Over 218-233 (TLLKNSMKKNISSRKK) the chain is Cytoplasmic. A helical membrane pass occupies residues 234–254 (AIGMIIVVTAAFLISFMPYHI). At 255-279 (QRTIHLHFLHNDTKHCDSVLRMQKS) the chain is on the extracellular side. The N-linked (GlcNAc...) asparagine glycan is linked to Asn265. Residues 280-300 (VXITLSLAASNCCFDPLLYFF) form a helical membrane-spanning segment. Residues 301-340 (SGGNFREGLSTFRKHSLSTMTYVPKKKTSLPEKAQEIYKE) are Cytoplasmic-facing.

This sequence belongs to the G-protein coupled receptor 1 family.

It is found in the cell membrane. Its function is as follows. Receptor for cysteinyl leukotrienes mediating constriction of the microvascular smooth muscle during an inflammatory response. This response is mediated via a G-protein that activates a phosphatidylinositol-calcium second messenger system. In Sus scrofa (Pig), this protein is Cysteinyl leukotriene receptor 1 (CYSLTR1).